The sequence spans 101 residues: Large ribosomal subunit protein eL30 (101 aa).

It belongs to the eukaryotic ribosomal protein eL30 family.

This is Large ribosomal subunit protein eL30 from Pyrobaculum calidifontis (strain DSM 21063 / JCM 11548 / VA1).